The following is a 140-amino-acid chain: ATP synthase epsilon chain (140 aa).

This sequence belongs to the ATPase epsilon chain family. In terms of assembly, F-type ATPases have 2 components, CF(1) - the catalytic core - and CF(0) - the membrane proton channel. CF(1) has five subunits: alpha(3), beta(3), gamma(1), delta(1), epsilon(1). CF(0) has three main subunits: a, b and c.

Its subcellular location is the cell inner membrane. Produces ATP from ADP in the presence of a proton gradient across the membrane. This chain is ATP synthase epsilon chain, found in Nitrosomonas eutropha (strain DSM 101675 / C91 / Nm57).